Reading from the N-terminus, the 360-residue chain is Phosphoserine aminotransferase (360 aa).

Arg42 lines the L-glutamate pocket. Pyridoxal 5'-phosphate is bound by residues 76–77 (AS), Trp102, Thr152, Asp172, and Gln195. The residue at position 196 (Lys196) is an N6-(pyridoxal phosphate)lysine. Pyridoxal 5'-phosphate is bound at residue 237–238 (NT).

Belongs to the class-V pyridoxal-phosphate-dependent aminotransferase family. SerC subfamily. In terms of assembly, homodimer. Requires pyridoxal 5'-phosphate as cofactor.

The protein resides in the cytoplasm. The enzyme catalyses O-phospho-L-serine + 2-oxoglutarate = 3-phosphooxypyruvate + L-glutamate. It carries out the reaction 4-(phosphooxy)-L-threonine + 2-oxoglutarate = (R)-3-hydroxy-2-oxo-4-phosphooxybutanoate + L-glutamate. It participates in amino-acid biosynthesis; L-serine biosynthesis; L-serine from 3-phospho-D-glycerate: step 2/3. Catalyzes the reversible conversion of 3-phosphohydroxypyruvate to phosphoserine and of 3-hydroxy-2-oxo-4-phosphonooxybutanoate to phosphohydroxythreonine. The protein is Phosphoserine aminotransferase of Bacillus thuringiensis subsp. konkukian (strain 97-27).